We begin with the raw amino-acid sequence, 191 residues long: Glutathione-independent glyoxalase DJ-1 (191 aa).

Residues glutamate 16, cysteine 111, and histidine 130 contribute to the active site.

The protein belongs to the peptidase C56 family.

It localises to the cytoplasm. The protein localises to the nucleus. The enzyme catalyses methylglyoxal + H2O = (R)-lactate + H(+). Catalyzes the conversion of methylglyoxal (MG) to D-lactate in a single glutathione (GSH)-independent step. May play a role in detoxifying endogenously produced glyoxals. Involved in protection against reactive oxygen species (ROS). The polypeptide is Glutathione-independent glyoxalase DJ-1 (Schizosaccharomyces pombe (strain 972 / ATCC 24843) (Fission yeast)).